A 142-amino-acid chain; its full sequence is Large ribosomal subunit protein uL13 (142 aa).

This sequence belongs to the universal ribosomal protein uL13 family. Part of the 50S ribosomal subunit.

This protein is one of the early assembly proteins of the 50S ribosomal subunit, although it is not seen to bind rRNA by itself. It is important during the early stages of 50S assembly. This is Large ribosomal subunit protein uL13 from Nitrosococcus oceani (strain ATCC 19707 / BCRC 17464 / JCM 30415 / NCIMB 11848 / C-107).